A 394-amino-acid polypeptide reads, in one-letter code: Penicillopepsin-3 (394 aa).

The first 20 residues, 1–20, serve as a signal peptide directing secretion; sequence MVSFTQLQLAFLGLSALGAA. Positions 21–70 are cleaved as a propeptide — activation peptide; the sequence is VPVTGTSEKKTFSLNQVKVAGTKTKNPAEHYANALRKYGAEVPSHVLAAA. Residues 87–392 enclose the Peptidase A1 domain; the sequence is YLTPIDVGGT…DASGPRLGFA (306 aa). Catalysis depends on residues aspartate 103 and aspartate 284. A disulfide bridge links cysteine 320 with cysteine 355.

The protein belongs to the peptidase A1 family. In terms of assembly, monomer.

The protein resides in the secreted. It carries out the reaction Hydrolysis of proteins with broad specificity similar to that of pepsin A, preferring hydrophobic residues at P1 and P1', but also cleaving 20-Gly-|-Glu-21 in the B chain of insulin. Clots milk, and activates trypsinogen.. Functionally, secreted aspartic endopeptidase that allows assimilation of proteinaceous substrates. The scissile peptide bond is attacked by a nucleophilic water molecule activated by two aspartic residues in the active site. Shows a broad primary substrate specificity. Favors hydrophobic residues at the P1 and P1' positions, but can also activate trypsinogen and hydrolyze the B chain of insulin between positions 'Gly-20' and 'Glu-21'. The chain is Penicillopepsin-3 from Penicillium janthinellum (Penicillium vitale).